We begin with the raw amino-acid sequence, 218 residues long: Eukaryotic translation initiation factor 3 subunit K (218 aa).

N-acetylalanine is present on Ala2. Residue Thr28 is modified to Phosphothreonine. The 163-residue stretch at 42–204 (YDLEANLAVL…SIKPKNIVEK (163 aa)) folds into the PCI domain. Position 217 is a phosphoserine (Ser217).

Belongs to the eIF-3 subunit K family. As to quaternary structure, component of the eukaryotic translation initiation factor 3 (eIF-3) complex, which is composed of 13 subunits: EIF3A, EIF3B, EIF3C, EIF3D, EIF3E, EIF3F, EIF3G, EIF3H, EIF3I, EIF3J, EIF3K, EIF3L and EIF3M. The eIF-3 complex appears to include 3 stable modules: module A is composed of EIF3A, EIF3B, EIF3G and EIF3I; module B is composed of EIF3F, EIF3H, and EIF3M; and module C is composed of EIF3C, EIF3D, EIF3E, EIF3K and EIF3L. EIF3C of module C binds EIF3B of module A and EIF3H of module B, thereby linking the three modules. EIF3J is a labile subunit that binds to the eIF-3 complex via EIF3B. The eIF-3 complex interacts with RPS6KB1 under conditions of nutrient depletion. Mitogenic stimulation leads to binding and activation of a complex composed of MTOR and RPTOR, leading to phosphorylation and release of RPS6KB1 and binding of EIF4B to eIF-3. Interacts with CCND3, but not with CCND1 and CCND2.

It is found in the nucleus. Its subcellular location is the cytoplasm. Component of the eukaryotic translation initiation factor 3 (eIF-3) complex, which is required for several steps in the initiation of protein synthesis. The eIF-3 complex associates with the 40S ribosome and facilitates the recruitment of eIF-1, eIF-1A, eIF-2:GTP:methionyl-tRNAi and eIF-5 to form the 43S pre-initiation complex (43S PIC). The eIF-3 complex stimulates mRNA recruitment to the 43S PIC and scanning of the mRNA for AUG recognition. The eIF-3 complex is also required for disassembly and recycling of post-termination ribosomal complexes and subsequently prevents premature joining of the 40S and 60S ribosomal subunits prior to initiation. The eIF-3 complex specifically targets and initiates translation of a subset of mRNAs involved in cell proliferation, including cell cycling, differentiation and apoptosis, and uses different modes of RNA stem-loop binding to exert either translational activation or repression. The sequence is that of Eukaryotic translation initiation factor 3 subunit K from Bos taurus (Bovine).